We begin with the raw amino-acid sequence, 132 residues long: Ribosome-binding factor A (132 aa).

Belongs to the RbfA family. Monomer. Binds 30S ribosomal subunits, but not 50S ribosomal subunits or 70S ribosomes.

Its subcellular location is the cytoplasm. In terms of biological role, one of several proteins that assist in the late maturation steps of the functional core of the 30S ribosomal subunit. Associates with free 30S ribosomal subunits (but not with 30S subunits that are part of 70S ribosomes or polysomes). Required for efficient processing of 16S rRNA. May interact with the 5'-terminal helix region of 16S rRNA. This Pectobacterium atrosepticum (strain SCRI 1043 / ATCC BAA-672) (Erwinia carotovora subsp. atroseptica) protein is Ribosome-binding factor A.